Here is a 329-residue protein sequence, read N- to C-terminus: Acetyl-coenzyme A carboxylase carboxyl transferase subunit alpha (329 aa).

The CoA carboxyltransferase C-terminal domain maps to Gln40–Glu294.

It belongs to the AccA family. In terms of assembly, acetyl-CoA carboxylase is a heterohexamer composed of biotin carboxyl carrier protein (AccB), biotin carboxylase (AccC) and two subunits each of ACCase subunit alpha (AccA) and ACCase subunit beta (AccD).

The protein resides in the cytoplasm. The enzyme catalyses N(6)-carboxybiotinyl-L-lysyl-[protein] + acetyl-CoA = N(6)-biotinyl-L-lysyl-[protein] + malonyl-CoA. It participates in lipid metabolism; malonyl-CoA biosynthesis; malonyl-CoA from acetyl-CoA: step 1/1. Component of the acetyl coenzyme A carboxylase (ACC) complex. First, biotin carboxylase catalyzes the carboxylation of biotin on its carrier protein (BCCP) and then the CO(2) group is transferred by the carboxyltransferase to acetyl-CoA to form malonyl-CoA. The chain is Acetyl-coenzyme A carboxylase carboxyl transferase subunit alpha from Synechococcus sp. (strain CC9311).